Consider the following 486-residue polypeptide: Cardiolipin synthase A (486 aa).

A run of 2 helical transmembrane segments spans residues 3-23 (TVYT…IAGV) and 38-58 (MAWL…YLAV). 2 consecutive PLD phosphodiesterase domains span residues 219–246 (MDLR…VDPR) and 399–426 (EGGL…DMRS). Active-site residues include H224, K226, D231, H404, K406, and D411.

This sequence belongs to the phospholipase D family. Cardiolipin synthase subfamily. ClsA sub-subfamily.

Its subcellular location is the cell inner membrane. The catalysed reaction is 2 a 1,2-diacyl-sn-glycero-3-phospho-(1'-sn-glycerol) = a cardiolipin + glycerol. Its function is as follows. Catalyzes the reversible phosphatidyl group transfer from one phosphatidylglycerol molecule to another to form cardiolipin (CL) (diphosphatidylglycerol) and glycerol. This chain is Cardiolipin synthase A, found in Escherichia coli O7:K1 (strain IAI39 / ExPEC).